Reading from the N-terminus, the 102-residue chain is Feather keratin (102 aa).

The residue at position 1 (S1) is an N-acetylserine.

Belongs to the avian keratin family. The avian keratins (F-ker, S-ker, C-ker and B-ker) are a complex mixture of very similar polypeptides.

In Dromaius novaehollandiae (Emu), this protein is Feather keratin.